Reading from the N-terminus, the 441-residue chain is MSKVTPQPKIGFVSLGCPKNLVDSERILTELRTEGYDVVPSYDDANMVIVNTCGFIDSAVQESLEAIGEALNENGKVIVTGCLGAKEDQIREVHPKVLEITGPHSYEQVLEHVHHYVPKPKHNPFLSLVPEQGVKLTPRHYAYLKISEGCNHRCTFCIIPSMRGDLVSRPIGEVLSEAKRLVDAGVKEILVISQDTSAYGVDVKHRTGFHNGEPVKTSMVSLCEQLSKLGIWTRLHYVYPYPHVDDVIPLMAEGKILPYLDIPLQHASPRILKLMKRPGSVDRQLARIKQWREICPELTLRSTFIVGFPGETEEDFQMLLDFLKEARLDRVGCFKYSPVEGADANALPDQVPEEVKEERWNRFMQLQQQISAERLQEKVGREILVIIDEVDEEGAIGRSMADAPEIDGAVYLNGETNVKPGDILRVKVEHADEYDLWGSRV.

Residues 8 to 118 (PKIGFVSLGC…VLEHVHHYVP (111 aa)) form the MTTase N-terminal domain. [4Fe-4S] cluster is bound by residues C17, C53, C82, C150, C154, and C157. The Radical SAM core domain occupies 136–373 (LTPRHYAYLK…MQLQQQISAE (238 aa)). The TRAM domain occupies 376-441 (QEKVGREILV…DEYDLWGSRV (66 aa)).

This sequence belongs to the methylthiotransferase family. RimO subfamily. [4Fe-4S] cluster is required as a cofactor.

The protein localises to the cytoplasm. The enzyme catalyses L-aspartate(89)-[ribosomal protein uS12]-hydrogen + (sulfur carrier)-SH + AH2 + 2 S-adenosyl-L-methionine = 3-methylsulfanyl-L-aspartate(89)-[ribosomal protein uS12]-hydrogen + (sulfur carrier)-H + 5'-deoxyadenosine + L-methionine + A + S-adenosyl-L-homocysteine + 2 H(+). Catalyzes the methylthiolation of an aspartic acid residue of ribosomal protein uS12. The chain is Ribosomal protein uS12 methylthiotransferase RimO from Shigella flexneri.